A 922-amino-acid chain; its full sequence is Lysine-specific demethylase 7A (922 aa).

The PHD-type zinc-finger motif lies at 6–57 (PVYCVCRQPYDVSRFMIECDICKDWFHSSCVKVEEHQAADIDLYHCPNCEVL). In terms of domain architecture, JmjC spans 199–355 (FSDTKMADLV…MQLRCYEMEK (157 aa)). Thr-248 lines the substrate pocket. Residues His-251 and Asp-253 each contribute to the Fe cation site. Residue Lys-268 participates in substrate binding. His-323 contributes to the Fe cation binding site. 5 disordered regions span residues 445 to 490 (EEEG…TKTP), 565 to 607 (RSLY…TQKP), 622 to 711 (GSSE…EQEA), 754 to 773 (GKEH…HHVK), and 872 to 902 (LHPT…MATA). Over residues 473–483 (HHSGRKARRLR) the composition is skewed to basic residues. Acidic residues predominate over residues 648–666 (ESESSGDDDDEEEEEEEER). Basic and acidic residues-rich tracts occupy residues 667–683 (QEPI…RRLP) and 691–701 (PDHDSPQKREC).

It belongs to the JHDM1 histone demethylase family. JHDM1D subfamily. It depends on Fe(2+) as a cofactor.

Its subcellular location is the nucleus. Functionally, histone demethylase required for brain development. Specifically demethylates dimethylated 'Lys-9' and 'Lys-27' (H3K9me2 and H3K27me2, respectively) of histone H3 and monomethylated histone H4 'Lys-20' residue (H4K20Me1), thereby playing a central role in histone code. This Xenopus tropicalis (Western clawed frog) protein is Lysine-specific demethylase 7A (kdm7a).